Reading from the N-terminus, the 397-residue chain is Acetate kinase 2 (397 aa).

Asparagine 8 provides a ligand contact to Mg(2+). An ATP-binding site is contributed by lysine 15. Substrate is bound at residue arginine 89. Aspartate 146 serves as the catalytic Proton donor/acceptor. ATP-binding positions include 206-210 (HLGNG), 281-283 (DLR), and 329-333 (GIGEN). Glutamate 382 contributes to the Mg(2+) binding site.

It belongs to the acetokinase family. Homodimer. It depends on Mg(2+) as a cofactor. Mn(2+) is required as a cofactor.

It localises to the cytoplasm. It carries out the reaction acetate + ATP = acetyl phosphate + ADP. It participates in metabolic intermediate biosynthesis; acetyl-CoA biosynthesis; acetyl-CoA from acetate: step 1/2. Catalyzes the formation of acetyl phosphate from acetate and ATP. Can also catalyze the reverse reaction. The sequence is that of Acetate kinase 2 from Listeria monocytogenes serotype 4b (strain F2365).